A 242-amino-acid polypeptide reads, in one-letter code: Carboxy-S-adenosyl-L-methionine synthase (242 aa).

Residues tyrosine 39, 64–66 (GCS), 89–90 (DN), 117–118 (DI), asparagine 132, and arginine 199 each bind S-adenosyl-L-methionine.

The protein belongs to the class I-like SAM-binding methyltransferase superfamily. Cx-SAM synthase family. As to quaternary structure, homodimer.

The enzyme catalyses prephenate + S-adenosyl-L-methionine = carboxy-S-adenosyl-L-methionine + 3-phenylpyruvate + H2O. Catalyzes the conversion of S-adenosyl-L-methionine (SAM) to carboxy-S-adenosyl-L-methionine (Cx-SAM). This Aliivibrio salmonicida (strain LFI1238) (Vibrio salmonicida (strain LFI1238)) protein is Carboxy-S-adenosyl-L-methionine synthase.